A 504-amino-acid chain; its full sequence is Cytochrome P450 3A2 (504 aa).

Cys443 contacts heme.

Belongs to the cytochrome P450 family. Heme is required as a cofactor. Expressed in liver.

It localises to the endoplasmic reticulum membrane. Its subcellular location is the microsome membrane. It carries out the reaction an organic molecule + reduced [NADPH--hemoprotein reductase] + O2 = an alcohol + oxidized [NADPH--hemoprotein reductase] + H2O + H(+). Functionally, cytochromes P450 are a group of heme-thiolate monooxygenases. In liver microsomes, this enzyme is involved in an NADPH-dependent electron transport pathway. It oxidizes a variety of structurally unrelated compounds, including steroids, fatty acids, and xenobiotics. The polypeptide is Cytochrome P450 3A2 (Cyp3a2) (Rattus norvegicus (Rat)).